Reading from the N-terminus, the 184-residue chain is Ras-related protein RabN2 (184 aa).

GTP is bound at residue 3 to 10; sequence GDYRSGKT. The Effector region motif lies at 25 to 32; the sequence is TNPSTFDY. GTP contacts are provided by residues 50-54 and 117-120; these read DTAGH and TKSD.

The protein belongs to the small GTPase superfamily. Rab family.

This Dictyostelium discoideum (Social amoeba) protein is Ras-related protein RabN2 (rabN2).